The following is a 277-amino-acid chain: Energy-coupling factor transporter ATP-binding protein EcfA1 (277 aa).

Residues 4-238 (IETQDLCHTY…PDLLSSVRLD (235 aa)) enclose the ABC transporter domain. 37–44 (GPNGAGKS) contributes to the ATP binding site.

Belongs to the ABC transporter superfamily. Energy-coupling factor EcfA family. In terms of assembly, forms a stable energy-coupling factor (ECF) transporter complex composed of 2 membrane-embedded substrate-binding proteins (S component), 2 ATP-binding proteins (A component) and 2 transmembrane proteins (T component).

It localises to the cell membrane. In terms of biological role, ATP-binding (A) component of a common energy-coupling factor (ECF) ABC-transporter complex. Unlike classic ABC transporters this ECF transporter provides the energy necessary to transport a number of different substrates. The protein is Energy-coupling factor transporter ATP-binding protein EcfA1 of Methanospirillum hungatei JF-1 (strain ATCC 27890 / DSM 864 / NBRC 100397 / JF-1).